The chain runs to 350 residues: Renin receptor (350 aa).

Residues 1-16 form the signal peptide; the sequence is MAVFVVLLALVAGVLG. The Extracellular segment spans residues 17 to 302; it reads NEFSILKSPG…YNLAYKYNFE (286 aa). A helical transmembrane segment spans residues 303 to 323; sequence YSVVFNMVLWIMIALALAVII. At 324-350 the chain is on the cytoplasmic side; that stretch reads TSYNIWNMDPGYDSIIYRMTNQKIRMD. Positions 346–350 match the Mediates retrograde transport to the ER motif; that stretch reads KIRMD.

As to quaternary structure, interacts with renin. Accessory component of the multisubunit proton-transporting vacuolar (V)-ATPase protein pump. Interacts (via N-terminus) with ATP6AP1 (via N-terminus). Interacts with ATP6V0D1; ATP6V0D1 is a V-ATPase complex subunit and the interaction promotes V-ATPase complex assembly. Interacts with TMEM9; TMEM9 is a V-ATPase assembly regulator and the interaction induces the interaction with ATP6V0D1. Interacts with VMA21 (via N-terminus); VMA21 is a V-ATPase accessory component. Post-translationally, phosphorylated. Proteolytically cleaved by a furin-like convertase in the trans-Golgi network to generate N- and C-terminal fragments. As to expression, expressed in brain, heart, placenta, liver, kidney and pancreas. Barely detectable in lung and skeletal muscles. In the kidney cortex it is restricted to the mesangium of glomeruli. In the coronary and kidney artery it is expressed in the subendothelium, associated to smooth muscles where it colocalizes with REN. Expressed in vascular structures and by syncytiotrophoblast cells in the mature fetal placenta.

Its subcellular location is the endoplasmic reticulum membrane. It is found in the lysosome membrane. The protein resides in the cytoplasmic vesicle. The protein localises to the autophagosome membrane. It localises to the cell projection. Its subcellular location is the dendritic spine membrane. It is found in the axon. The protein resides in the endosome membrane. The protein localises to the clathrin-coated vesicle membrane. It localises to the secretory vesicle. Its subcellular location is the synaptic vesicle membrane. Multifunctional protein which functions as a renin, prorenin cellular receptor and is involved in the assembly of the lysosomal proton-transporting V-type ATPase (V-ATPase) and the acidification of the endo-lysosomal system. May mediate renin-dependent cellular responses by activating ERK1 and ERK2. By increasing the catalytic efficiency of renin in AGT/angiotensinogen conversion to angiotensin I, may also play a role in the renin-angiotensin system (RAS). Through its function in V-type ATPase (v-ATPase) assembly and acidification of the lysosome it regulates protein degradation and may control different signaling pathways important for proper brain development, synapse morphology and synaptic transmission. The chain is Renin receptor from Homo sapiens (Human).